The chain runs to 65 residues: Large ribosomal subunit protein bL35 (65 aa).

The disordered stretch occupies residues 1 to 22 (MPKIKTVRGAAKRFKKTGSGGF). Positions 10-22 (AAKRFKKTGSGGF) are enriched in basic residues.

The protein belongs to the bacterial ribosomal protein bL35 family.

This Serratia proteamaculans (strain 568) protein is Large ribosomal subunit protein bL35.